A 272-amino-acid polypeptide reads, in one-letter code: L-aminoadipate-semialdehyde dehydrogenase-phosphopantetheinyl transferase (272 aa).

Belongs to the P-Pant transferase superfamily. AcpS family.

The enzyme catalyses apo-[ACP] + CoA = holo-[ACP] + adenosine 3',5'-bisphosphate + H(+). Its function is as follows. Catalyzes the transfer of a 4'-phosphopantetheine moiety from coenzyme A to a serine residue of acceptor proteins, such as alpha-aminoadipate reductase. Necessary for alpha-aminoadipate reductase activity. The protein is L-aminoadipate-semialdehyde dehydrogenase-phosphopantetheinyl transferase of Saccharomyces cerevisiae (strain ATCC 204508 / S288c) (Baker's yeast).